The primary structure comprises 110 residues: U1-lycotoxin-Ls1bb (110 aa).

An N-terminal signal peptide occupies residues 1–20 (MKFVLLFGVLLVTLFSYSSA). Positions 21–44 (EMLDDFDQADEDELLSLIEKEEAR) are excised as a propeptide. Cystine bridges form between cysteine 47/cysteine 62, cysteine 54/cysteine 71, cysteine 61/cysteine 89, and cysteine 73/cysteine 87.

It belongs to the neurotoxin 19 (CSTX) family. 03 subfamily. In terms of tissue distribution, expressed by the venom gland.

The protein localises to the secreted. In Lycosa singoriensis (Wolf spider), this protein is U1-lycotoxin-Ls1bb.